Here is a 467-residue protein sequence, read N- to C-terminus: MTSNPPDLRPDLAPKPTFGTAPRPDQPTLGMVSLGCPKALVDSERILTRLRAEGYGISADYAGADAVIVNTCGFLDSAKAESLEAIGEALKENGKVIVTGCLGAEPDYIREHHPRILAVTGPHQYEQVLDAVHAAVPPSPDPFVDLLPATGVSLTPRHFSYLKISEGCNHKCKFCIIPDMRGKLASRPAHAVLREAEKLVTAGVRELLVISQDTSAYGLDRKYDVNPWKDGEVRSHITDLSRALGELAPADQLWVRLHYVYPYPHVRELIPLMADPENAVLPYLDIPFQHAHPDVLRRMARPAAAAKTLDEIRAWRAICPDITLRSTFIVGYPGETEAEFQHLLDWMDEAQLDRVGCFKYENVDGARSNDLPDHVAEEVKQNRWERFMEKAQAISEAKLASKVGQTLQVIVDEIDEDGIATCRTKADAPEIDGNLFIDEGTANLSVGDLVTVEVDEAGEYDLWGALR.

Positions 1–27 (MTSNPPDLRPDLAPKPTFGTAPRPDQP) are disordered. Residues 27-137 (PTLGMVSLGC…VLDAVHAAVP (111 aa)) enclose the MTTase N-terminal domain. C36, C72, C101, C168, C172, and C175 together coordinate [4Fe-4S] cluster. The Radical SAM core domain occupies 154–397 (LTPRHFSYLK…MEKAQAISEA (244 aa)). The TRAM domain occupies 400-467 (ASKVGQTLQV…GEYDLWGALR (68 aa)).

The protein belongs to the methylthiotransferase family. RimO subfamily. [4Fe-4S] cluster is required as a cofactor.

It localises to the cytoplasm. It carries out the reaction L-aspartate(89)-[ribosomal protein uS12]-hydrogen + (sulfur carrier)-SH + AH2 + 2 S-adenosyl-L-methionine = 3-methylsulfanyl-L-aspartate(89)-[ribosomal protein uS12]-hydrogen + (sulfur carrier)-H + 5'-deoxyadenosine + L-methionine + A + S-adenosyl-L-homocysteine + 2 H(+). Functionally, catalyzes the methylthiolation of an aspartic acid residue of ribosomal protein uS12. The protein is Ribosomal protein uS12 methylthiotransferase RimO of Ruegeria sp. (strain TM1040) (Silicibacter sp.).